The following is a 165-amino-acid chain: MTILNSLNQFSKGRLSWLLLLLFVVFFEACALYFQHVMMLAPCVMCIYERVAMMGVGVAAIVGLMAPNNPIFRWLGLIGWGLSSYKGLLLAQQHVDYQFNPSPFATCDLFVTFPSWRPLNQWAPWIFEAYGDCSKIVWQFLDLSMPQWLVVIFAGNLIALALIVI.

The Cytoplasmic segment spans residues 1–16; sequence MTILNSLNQFSKGRLS. The chain crosses the membrane as a helical span at residues 17 to 33; the sequence is WLLLLLFVVFFEACALY. Residues 34-51 are Periplasmic-facing; it reads FQHVMMLAPCVMCIYERV. Cysteines 43 and 46 form a disulfide. The helical transmembrane segment at 52-67 threads the bilayer; that stretch reads AMMGVGVAAIVGLMAP. Topologically, residues 68 to 74 are cytoplasmic; sequence NNPIFRW. The chain crosses the membrane as a helical span at residues 75–92; the sequence is LGLIGWGLSSYKGLLLAQ. Over 93–147 the chain is Periplasmic; the sequence is QHVDYQFNPSPFATCDLFVTFPSWRPLNQWAPWIFEAYGDCSKIVWQFLDLSMPQ. Cysteine 107 and cysteine 133 form a disulfide bridge. Residues 148 to 165 traverse the membrane as a helical segment; that stretch reads WLVVIFAGNLIALALIVI.

The protein belongs to the DsbB family.

It localises to the cell inner membrane. Its function is as follows. Required for disulfide bond formation in some periplasmic proteins. Acts by oxidizing the DsbA protein. The polypeptide is Disulfide bond formation protein B (Vibrio alginolyticus).